Here is a 375-residue protein sequence, read N- to C-terminus: G-protein coupled estrogen receptor 1 (375 aa).

The residue at position 1 (methionine 1) is an N-acetylmethionine. At 1–62 (MAATTPAQDV…QQYVIALFLS (62 aa)) the chain is on the extracellular side. Asparagine 32 and asparagine 44 each carry an N-linked (GlcNAc...) asparagine glycan. Residues 63–84 (CLYTIFLFPIGFVGNILILVVN) form a helical membrane-spanning segment. Topologically, residues 85–96 (ISFREKMTIPDL) are cytoplasmic. The helical transmembrane segment at 97-120 (YFINLAAADLILVADSLIEVFNLD) threads the bilayer. Over 121–132 (EQYYDIAVLCTF) the chain is Extracellular. An intrachain disulfide couples cysteine 130 to cysteine 207. Residues 133 to 153 (MSLFLQINMYSSVFFLTWMSF) traverse the membrane as a helical segment. Residues 154–175 (DRYLALAKAMRCGLFRTKHHAR) are Cytoplasmic-facing. A helical membrane pass occupies residues 176 to 194 (LSCGLIWMASVSATLVPFT). The Extracellular segment spans residues 195-220 (AVHLRHTEEACFCFADVREVQWLEVT). The helical transmembrane segment at 221-236 (LGFIVPFAIIGLCYSL) threads the bilayer. The Cytoplasmic portion of the chain corresponds to 237–259 (IVRALIRAHRHRGLRPRRQKALR). The helical transmembrane segment at 260 to 280 (MIFAVVLVFFICWLPENVFIS) threads the bilayer. The Extracellular portion of the chain corresponds to 281–306 (VHLLQWAQPGDTPCKQSFRHAYPLTG). A helical transmembrane segment spans residues 307–327 (HIVNLAAFSNSCLSPLIYSFL). At 328–375 (GETFRDKLRLYVAQKTSLPALNRFCHATLKAVIPDSTEQSDVKFSSAV) the chain is on the cytoplasmic side.

This sequence belongs to the G-protein coupled receptor 1 family. As to quaternary structure, homodimer. Heterodimer; heterodimerizes with other G-protein-coupled receptor (GPCRs) like CRHR1, HTR1A and PAQR8. Interacts with RAMP3; the interaction confers proper subcellular localization and function in cardioprotection. Interacts with KRT7 and KRT8. Interacts with EGFR; the interaction increases after agonist-induced stimulation in cancer-associated fibroblasts (CAF). Interacts with EGFR and ESR1. Interacts (via C-terminus tail motif) with DLG4 (via N-terminus tandem pair of PDZ domains); the interaction is direct and induces the increase of GPER1 protein levels residing at the plasma membrane surface in a estradiol-independent manner. Ubiquitinated; ubiquitination occurs at the plasma membrane and leads to proteasome-mediated degradation. In terms of processing, glycosylated. Expressed in the brain. Expressed in neurons of the hippocampus, hypothalamic paraventricular nucleus (PVN), supraoptic nucleus (SON) and the median eminence. Expressed in magnocellular neurosecretory cells (MNCs) which secrete oxytocin but not in MNCs which secrete vasopressin. Expressed in glial cells. Expressed in the nucleus ambiguous. Expressed in epithelial cells, in pachytene spermatocytes (PS) (at protein level). Expressed strongly in vascular endothelial cells and poorly in vascular smooth muscle cells (VSMC). Expressed in the brain, lung, pituitary gland, adrenal medulla, renal pelvis and ovary. Expressed in CA1 hippocampus. Expressed weakly in heart, skeletal muscle and kidney.

It is found in the nucleus. The protein resides in the cytoplasm. It localises to the perinuclear region. The protein localises to the cytoskeleton. Its subcellular location is the cytoplasmic vesicle membrane. It is found in the cell membrane. The protein resides in the basolateral cell membrane. It localises to the endoplasmic reticulum membrane. The protein localises to the early endosome. Its subcellular location is the recycling endosome. It is found in the golgi apparatus. The protein resides in the trans-Golgi network. It localises to the golgi apparatus membrane. The protein localises to the cell projection. Its subcellular location is the dendrite. It is found in the dendritic spine membrane. The protein resides in the axon. It localises to the postsynaptic density. The protein localises to the mitochondrion membrane. Functionally, G-protein coupled estrogen receptor that binds to 17-beta-estradiol (E2) with high affinity, leading to rapid and transient activation of numerous intracellular signaling pathways. Stimulates cAMP production, calcium mobilization and tyrosine kinase Src inducing the release of heparin-bound epidermal growth factor (HB-EGF) and subsequent transactivation of the epidermal growth factor receptor (EGFR), activating downstream signaling pathways such as PI3K/Akt and ERK/MAPK. Mediates pleiotropic functions among others in the cardiovascular, endocrine, reproductive, immune and central nervous systems. Has a role in cardioprotection by reducing cardiac hypertrophy and perivascular fibrosis in a RAMP3-dependent manner. Regulates arterial blood pressure by stimulating vasodilation and reducing vascular smooth muscle and microvascular endothelial cell proliferation. Plays a role in blood glucose homeostasis contributing to the insulin secretion response by pancreatic beta cells. Triggers mitochondrial apoptosis during pachytene spermatocyte differentiation. Stimulates uterine epithelial cell proliferation. Enhances uterine contractility in response to oxytocin. Contributes to thymic atrophy by inducing apoptosis. Attenuates TNF-mediated endothelial expression of leukocyte adhesion molecules. Promotes neuritogenesis in developing hippocampal neurons. Plays a role in acute neuroprotection against NMDA-induced excitotoxic neuronal death. Increases firing activity and intracellular calcium oscillations in luteinizing hormone-releasing hormone (LHRH) neurons. Inhibits early osteoblast proliferation at growth plate during skeletal development. Inhibits mature adipocyte differentiation and lipid accumulation. Involved in the recruitment of beta-arrestin 2 ARRB2 at the plasma membrane in epithelial cells. Also functions as a receptor for aldosterone mediating rapid regulation of vascular contractibility through the PI3K/ERK signaling pathway. Involved in cancer progression regulation. Stimulates cancer-associated fibroblast (CAF) proliferation by a rapid genomic response through the EGFR/ERK transduction pathway. Associated with EGFR, may act as a transcription factor activating growth regulatory genes (c-fos, cyclin D1). Promotes integrin alpha-5/beta-1 and fibronectin (FN) matrix assembly in breast cancer cells. This Rattus norvegicus (Rat) protein is G-protein coupled estrogen receptor 1 (Gper1).